The primary structure comprises 1492 residues: MEPNMDANSITITVEGMTCISCVRTIEQQIGKVNGVHHIKVSLEEKSATVIYNPKLQTPKTLQEAIDDMGFDALLHNANPLPVLTNTVFLTVTAPLALPWDHIQSTLLKTKGVTGVKISPQQRSAVVTIIPSVVSANQIVELVPDLSLDMGTQEKKSGTSEEHSTPQAGEVLLKMRVEGMTCHSCTSTIEGKVGKLQGVQRIKVSLDNQEATIVYQPHLITAEEIKKQIEAVGFPAFIKKQPKYLKLGAIDVERLKSTPVKSSEGSQQKSPAYPSDSAITFTIDGMHCKSCVSNIESALSTLQYVSSIVVSLENRSAIVKYNASLVTPEILRKAIEAVSPGQYRVSISSEVESPTSSPSSSSLQKMPLNLVSQPLTQEVVININGMTCNSCVQSIEGVISKKPGVKSIHVSLTNSTGTIEYDPLLTSPEPLREAIEDMGFDAVLPADMKEPLVVIAQPSLETPLLPSTTEPENVMTPVQNKCYIQVSGMTCASCVANIERNLRREEGIYSVLVALMAGKAEVRYNPAVIQPRVIAELIRELGFGAVVMENAGEGNGILELVVRGMTCASCVHKIESTLTKHKGIFYCSVALATNKAHIKYDPEIIGPRDIIHTIGNLGFEASLVKKDRSANHLDHKREIKQWRGSFLVSLFFCIPVMGLMIYMMVMDHHLATLNHNQNMSNEEMINMHSSMFLERQILPGLSIMNLLSLLLCLPVQFCGGWYFYIQAYKALRHKTANMDVLIVLATTIAFAYSLVILLVAMYERAKVNPITFFDTPPMLFVFIALGRWLEHIAKGKTSEALAKLISLQATEATIVTLNSENLLLSEEQVDVELVQRGDIIKVVPGGKFPVDGRVIEGHSMVDESLITGEAMPVAKKPGSTVIAGSINQNGSLLIRATHVGADTTLSQIVKLVEEAQTSKAPIQQFADKLSGYFVPFIVLVSIVTLLVWIIIGFQNFEIVEAYFPGYNRSISRTETIIRFAFQASITVLCIACPCSLGLATPTAVMVGTGVGAQNGILIKGGEPLEMAHKVKVVVFDKTGTITHGTPVVNQVKVLVESNKISRNKILAIVGTAESNSEHPLGAAVTKYCKQELDTETLGTCTDFQVVPGCGISCKVTNIEGLLHKSNLKIEENNIKNASLVQIDAINEQSSPSSSMIIDAHLSNAVNTQQYKVLIGNREWMIRNGLVISNDVDESMIEHERRGRTAVLVTIDDELCGLIAIADTVKPEAELAVHILKSMGLEVVLMTGDNSKTARSIASQVGITKVFAEVLPSHKVAKVKQLQEEGKRVAMVGDGINDSPALAMASVGIAIGTGTDVAIEAADVVLIRNDLLDVVASIDLSRKTVKRIRINFVFALIYNLIGIPIAAGVFLPIGLVLQPWMGSAAMAASSVSVVLSSLFLKLYRKPTYDNYELRPRSHTGQRSPSEISVHVGIDDTSRNSPRLGLLDRIVNYSRASINSLLSDKRSLNSVVTSEPDKHSLLVGDFREDDDTTL.

The Cytoplasmic portion of the chain corresponds to 1-645 (MEPNMDANSI…KREIKQWRGS (645 aa)). 2 consecutive HMA domains span residues 8-74 (NSIT…FDAL) and 85-151 (TNTV…LDMG). Thr18, Cys19, and Cys22 together coordinate Cu(+). Thr152 bears the Phosphothreonine mark. The HMA 3 domain maps to 171–237 (VLLKMRVEGM…QIEAVGFPAF (67 aa)). The Cu(+) site is built by Cys182 and Cys185. Position 270 is a phosphoserine (Ser270). One can recognise an HMA 4 domain in the interval 277 to 343 (SAITFTIDGM…AIEAVSPGQY (67 aa)). Cu(+)-binding residues include Cys288 and Cys291. Thr327 carries the phosphothreonine modification. Ser339, Ser353, Ser357, and Ser362 each carry phosphoserine. HMA domains follow at residues 377-443 (QEVV…FDAV), 480-546 (NKCY…FGAV), and 556-622 (GILE…FEAS). Cu(+) is bound by residues Cys388, Cys391, Cys491, Cys494, Cys567, and Cys570. The chain crosses the membrane as a helical span at residues 646–667 (FLVSLFFCIPVMGLMIYMMVMD). Topologically, residues 668 to 706 (HHLATLNHNQNMSNEEMINMHSSMFLERQILPGLSIMNL) are extracellular. N-linked (GlcNAc...) asparagine glycosylation is present at Asn678. Residues 707–726 (LSLLLCLPVQFCGGWYFYIQ) form a helical membrane-spanning segment. Topologically, residues 727-733 (AYKALRH) are cytoplasmic. Residues 734-754 (KTANMDVLIVLATTIAFAYSL) form a helical membrane-spanning segment. The Extracellular segment spans residues 755 to 773 (VILLVAMYERAKVNPITFF). The chain crosses the membrane as a helical span at residues 774-794 (DTPPMLFVFIALGRWLEHIAK). Residues 795-927 (GKTSEALAKL…SKAPIQQFAD (133 aa)) lie on the Cytoplasmic side of the membrane. The helical transmembrane segment at 928 to 951 (KLSGYFVPFIVLVSIVTLLVWIII) threads the bilayer. Residues 952–981 (GFQNFEIVEAYFPGYNRSISRTETIIRFAF) lie on the Extracellular side of the membrane. Residues 982 to 1003 (QASITVLCIACPCSLGLATPTA) traverse the membrane as a helical segment. Over 1004 to 1348 (VMVGTGVGAQ…LSRKTVKRIR (345 aa)) the chain is Cytoplasmic. The 4-aspartylphosphate intermediate role is filled by Asp1036. Glu1073 contributes to the ATP binding site. Position 1204 is a phosphothreonine (Thr1204). Residues Asp1293 and Asp1297 each contribute to the Mg(2+) site. The helical transmembrane segment at 1349–1366 (INFVFALIYNLIGIPIAA) threads the bilayer. The Extracellular portion of the chain corresponds to 1367 to 1377 (GVFLPIGLVLQ). The chain crosses the membrane as a helical span at residues 1378–1397 (PWMGSAAMAASSVSVVLSSL). The Cytoplasmic portion of the chain corresponds to 1398 to 1492 (FLKLYRKPTY…DFREDDDTTL (95 aa)). Ser1422, Ser1424, Ser1452, Ser1455, and Ser1458 each carry phosphoserine. Positions 1459–1460 (LL) match the Endocytosis signal motif. 4 positions are modified to phosphoserine: Ser1461, Ser1465, Ser1468, and Ser1478. The tract at residues 1478–1492 (SLLVGDFREDDDTTL) is PDZD11-binding. Positions 1479–1480 (LL) match the Endocytosis signal motif.

The protein belongs to the cation transport ATPase (P-type) (TC 3.A.3) family. Type IB subfamily. In terms of assembly, monomer. Interacts with PDZD11. Interacts with ATOX1 and COMMD1. Interacts with TYRP1. Directly interacts with SOD3; this interaction is copper-dependent and is required for SOD3 activity. As to expression, expressed in hippocampal neuron (at protein level). Expressed in anterior pituitary gland (at protein level).

The protein resides in the golgi apparatus. Its subcellular location is the trans-Golgi network membrane. It localises to the cell membrane. The protein localises to the melanosome membrane. It is found in the early endosome membrane. The protein resides in the cell projection. Its subcellular location is the axon. It localises to the dendrite. The protein localises to the postsynaptic density. The catalysed reaction is Cu(+)(in) + ATP + H2O = Cu(+)(out) + ADP + phosphate + H(+). In terms of biological role, ATP-driven copper (Cu(+)) ion pump that plays an important role in intracellular copper ion homeostasis. Within a catalytic cycle, acquires Cu(+) ion from donor protein on the cytoplasmic side of the membrane and delivers it to acceptor protein on the lumenal side. The transfer of Cu(+) ion across the membrane is coupled to ATP hydrolysis and is associated with a transient phosphorylation that shifts the pump conformation from inward-facing to outward-facing state. Under physiological conditions, at low cytosolic copper concentration, it is localized at the trans-Golgi network (TGN) where it transfers Cu(+) ions to cuproenzymes of the secretory pathway. Upon elevated cytosolic copper concentrations, it relocalizes to the plasma membrane where it is responsible for the export of excess Cu(+) ions. May play a dual role in neuron function and survival by regulating cooper efflux and neuronal transmission at the synapse as well as by supplying Cu(+) ions to enzymes such as PAM, TYR and SOD3. In the melanosomes of pigmented cells, provides copper cofactor to TYR to form an active TYR holoenzyme for melanin biosynthesis. This chain is Copper-transporting ATPase 1, found in Rattus norvegicus (Rat).